We begin with the raw amino-acid sequence, 476 residues long: Glycogen synthase (476 aa).

Residue Lys15 participates in ADP-alpha-D-glucose binding.

It belongs to the glycosyltransferase 1 family. Bacterial/plant glycogen synthase subfamily.

The enzyme catalyses [(1-&gt;4)-alpha-D-glucosyl](n) + ADP-alpha-D-glucose = [(1-&gt;4)-alpha-D-glucosyl](n+1) + ADP + H(+). The protein operates within glycan biosynthesis; glycogen biosynthesis. In terms of biological role, synthesizes alpha-1,4-glucan chains using ADP-glucose. This is Glycogen synthase from Lactobacillus acidophilus (strain ATCC 700396 / NCK56 / N2 / NCFM).